Consider the following 60-residue polypeptide: UPF0434 protein YcaR (60 aa).

This sequence belongs to the UPF0434 family.

This chain is UPF0434 protein YcaR, found in Salmonella arizonae (strain ATCC BAA-731 / CDC346-86 / RSK2980).